We begin with the raw amino-acid sequence, 391 residues long: Processive diacylglycerol beta-glucosyltransferase (391 aa).

This sequence belongs to the glycosyltransferase 28 family. UgtP subfamily.

It is found in the cell membrane. The enzyme catalyses a 1,2-diacyl-3-O-(beta-D-glucopyranosyl)-sn-glycerol + UDP-alpha-D-glucose = a 1,2-diacyl-3-O-(beta-D-Glc-(1-&gt;6)-beta-D-Glc)-sn-glycerol + UDP + H(+). It catalyses the reaction a 1,2-diacyl-sn-glycerol + UDP-alpha-D-glucose = a 1,2-diacyl-3-O-(beta-D-glucopyranosyl)-sn-glycerol + UDP + H(+). It functions in the pathway glycolipid metabolism; diglucosyl-diacylglycerol biosynthesis. Functionally, processive glucosyltransferase involved in the biosynthesis of both the bilayer- and non-bilayer-forming membrane glucolipids. Is able to successively transfer two glucosyl residues to diacylglycerol (DAG), thereby catalyzing the formation of beta-monoglucosyl-DAG (3-O-(beta-D-glucopyranosyl)-1,2-diacyl-sn-glycerol) and beta-diglucosyl-DAG (3-O-(beta-D-glucopyranosyl-beta-(1-&gt;6)-D-glucopyranosyl)-1,2-diacyl-sn-glycerol). Beta-diglucosyl-DAG is the predominant glycolipid found in Bacillales and is also used as a membrane anchor for lipoteichoic acid (LTA). The sequence is that of Processive diacylglycerol beta-glucosyltransferase from Staphylococcus saprophyticus subsp. saprophyticus (strain ATCC 15305 / DSM 20229 / NCIMB 8711 / NCTC 7292 / S-41).